The sequence spans 144 residues: Transmembrane protein 170A (144 aa).

Residues 1–50 (MEREGSGGSGGSAGLLQQILSLKVVPRVGNGTLCPNSTSLCSFPEMWYGV) lie on the Lumenal side of the membrane. Residues N30 and N36 are each glycosylated (N-linked (GlcNAc...) asparagine). A helical membrane pass occupies residues 51–71 (FLWALVSSLFFHVPAGLLALF). At 72 to 85 (TLRHHKYGRFMSVS) the chain is on the cytoplasmic side. The helical transmembrane segment at 86 to 106 (ILLMGIVGPITAGILTSAAIA) threads the bilayer. Residues 107–116 (GVYRAAGKEM) lie on the Lumenal side of the membrane. The chain crosses the membrane as a helical span at residues 117-137 (IPFEALTLGTGQTFCVLVVSF). The Cytoplasmic segment spans residues 138–144 (LRILATL).

It belongs to the TMEM170 family. As to quaternary structure, interacts with RTN4.

The protein localises to the endoplasmic reticulum membrane. Its subcellular location is the nucleus envelope. Acts as a regulator of endoplasmic reticulum (ER) and nuclear envelope (NE) morphogenesis. Affects the ratio between tubular ER and ER sheets by promoting sheet formation at the expense of tubules. Influences NE expansion, nuclear pore complex formation and proper localization of inner nuclear membrane proteins. The sequence is that of Transmembrane protein 170A (TMEM170A) from Homo sapiens (Human).